A 148-amino-acid chain; its full sequence is MRCPFCHNEDTQVLDTRVSDEGDTIRRRRRCAKCDKRFTTYERVELALPAIVKKNGSRVEYSHDKLASSIKLALRKRSVSSDSVDESIARIEEKLLSFGEKEIPSERVGELVMRELKRLDKVAYIRFASVYRSFADIESFESALKELK.

A zinc finger lies at 3 to 34 (CPFCHNEDTQVLDTRVSDEGDTIRRRRRCAKC). An ATP-cone domain is found at 49-139 (PAIVKKNGSR…VYRSFADIES (91 aa)).

It belongs to the NrdR family. It depends on Zn(2+) as a cofactor.

Functionally, negatively regulates transcription of bacterial ribonucleotide reductase nrd genes and operons by binding to NrdR-boxes. The chain is Transcriptional repressor NrdR from Polynucleobacter necessarius subsp. necessarius (strain STIR1).